Consider the following 261-residue polypeptide: MKGEAYYSVRMRASENGPHEEGGKHISGGERLVPFIGLNDAVSDLLEKGMSHSRGRPDFMQIQFDLVNEPIKLVQPLRIETNETVSAEEGQALARELISRAGVPESAVEKAFQGIAEYWGVRGAVLFDIHSGRRIDGRKEKGVRVSRLDWPEADFQRWAALCGVPPNPRLKEALAIASKVCEHPAVIAELCWSDDPDYITGYVAAKKLGYQRMTKMKEHGDESGCRIFFVDGSADVKSCIDDLEKQPVFIGQEVNHESIIR.

This sequence belongs to the BioW family. As to quaternary structure, homodimer. Mg(2+) is required as a cofactor.

It carries out the reaction heptanedioate + ATP + CoA = 6-carboxyhexanoyl-CoA + AMP + diphosphate. The protein operates within metabolic intermediate metabolism; pimeloyl-CoA biosynthesis; pimeloyl-CoA from pimelate: step 1/1. Functionally, catalyzes the transformation of pimelate into pimeloyl-CoA with concomitant hydrolysis of ATP to AMP. This chain is 6-carboxyhexanoate--CoA ligase, found in Bacillus licheniformis (strain ATCC 14580 / DSM 13 / JCM 2505 / CCUG 7422 / NBRC 12200 / NCIMB 9375 / NCTC 10341 / NRRL NRS-1264 / Gibson 46).